The sequence spans 267 residues: MNALLSNPFKEGLRKGDTQIGLWLSSTTSYMAEIAATSGYDWLLIDGEHAPNTVQDLYHQLQAIAPYASQPVIRPIEGSKALIKQVLDIGAQTLLIPMVDTAEQARQVVSATRYPPLGQRGVGASVARAARWGRIDNYMAQANESLCLLVQVESKVALENLDAILEVEGIDGVFIGPADLSASLGYPDNAGHPEVQRIIEACIYRIRAAGKAAGFLAVDPTMAQKCLAWGANFVAVGVDTMLYTEALDSRLAMFKSVQSVSTAKRSY.

His49 serves as the catalytic Proton acceptor. Gln151 contributes to the substrate binding site. Residue Glu153 coordinates Mg(2+). Substrate is bound by residues Ala178 and Asp179. Asp179 contributes to the Mg(2+) binding site.

Belongs to the HpcH/HpaI aldolase family. KDR aldolase subfamily. As to quaternary structure, homohexamer. Mg(2+) serves as cofactor.

The enzyme catalyses 2-dehydro-3-deoxy-L-rhamnonate = (S)-lactaldehyde + pyruvate. Functionally, catalyzes the reversible retro-aldol cleavage of 2-keto-3-deoxy-L-rhamnonate (KDR) to pyruvate and lactaldehyde. This is 2-keto-3-deoxy-L-rhamnonate aldolase from Salmonella dublin (strain CT_02021853).